A 217-amino-acid polypeptide reads, in one-letter code: GrpE protein homolog 1, mitochondrial (217 aa).

Residues 1 to 27 constitute a mitochondrion transit peptide; that stretch reads MAARCVRLARRSLPALALSFRPSPRLL. Lys94 is subject to N6-acetyllysine; alternate. An N6-succinyllysine; alternate modification is found at Lys94. Position 100 is an N6-acetyllysine (Lys100). Lys120 bears the N6-succinyllysine mark. Lys215 bears the N6-acetyllysine; alternate mark. Lys215 is modified (N6-succinyllysine; alternate).

It belongs to the GrpE family. In terms of assembly, probable component of the PAM complex at least composed of a mitochondrial HSP70 protein, GRPEL1 or GRPEL2, TIMM44, TIMM16/PAM16 and TIMM14/DNAJC19. Binds to HSP70, HSC70 and HSJ1B. Ubiquitous. Particularly abundant in heart, kidney and liver.

The protein localises to the mitochondrion matrix. Essential component of the PAM complex, a complex required for the translocation of transit peptide-containing proteins from the inner membrane into the mitochondrial matrix in an ATP-dependent manner. Seems to control the nucleotide-dependent binding of mitochondrial HSP70 to substrate proteins. The protein is GrpE protein homolog 1, mitochondrial (Grpel1) of Rattus norvegicus (Rat).